We begin with the raw amino-acid sequence, 651 residues long: Threonine--tRNA ligase (651 aa).

One can recognise a TGS domain in the interval 1–64 (MSSVVHVTLP…EKDCTLQVLT (64 aa)). A catalytic region spans residues 245-535 (DHRRLGPELG…LTEHYAGNFP (291 aa)). Residues Cys336, His387, and His512 each contribute to the Zn(2+) site.

The protein belongs to the class-II aminoacyl-tRNA synthetase family. In terms of assembly, homodimer. Requires Zn(2+) as cofactor.

It is found in the cytoplasm. It carries out the reaction tRNA(Thr) + L-threonine + ATP = L-threonyl-tRNA(Thr) + AMP + diphosphate + H(+). In terms of biological role, catalyzes the attachment of threonine to tRNA(Thr) in a two-step reaction: L-threonine is first activated by ATP to form Thr-AMP and then transferred to the acceptor end of tRNA(Thr). Also edits incorrectly charged L-seryl-tRNA(Thr). The polypeptide is Threonine--tRNA ligase (Symbiobacterium thermophilum (strain DSM 24528 / JCM 14929 / IAM 14863 / T)).